Reading from the N-terminus, the 322-residue chain is Cysteine protease YopT (322 aa).

Residues Cys-139, His-258, and Asp-274 contribute to the active site.

The protein belongs to the peptidase C58 family. In terms of assembly, interacts with human ARHA.

The protein localises to the secreted. Cysteine protease, which is translocated into infected cells and plays a central role in pathogenesis by cleaving the C-terminus end of the human small GTPase RhoA/ARHA, a regulator of cytoskeleton. Once cleaved, ARHA loses its lipid modification, and is released from the cell membrane, leading to the subsequent disruption of actin cytoskeleton of the host cell. The protein is Cysteine protease YopT (yopT) of Yersinia pestis.